Consider the following 275-residue polypeptide: Bis(5'-nucleosyl)-tetraphosphatase, symmetrical (275 aa).

It belongs to the Ap4A hydrolase family.

The catalysed reaction is P(1),P(4)-bis(5'-adenosyl) tetraphosphate + H2O = 2 ADP + 2 H(+). In terms of biological role, hydrolyzes diadenosine 5',5'''-P1,P4-tetraphosphate to yield ADP. The polypeptide is Bis(5'-nucleosyl)-tetraphosphatase, symmetrical (Photorhabdus laumondii subsp. laumondii (strain DSM 15139 / CIP 105565 / TT01) (Photorhabdus luminescens subsp. laumondii)).